A 46-amino-acid polypeptide reads, in one-letter code: Large ribosomal subunit protein bL34c (46 aa).

Residues 1 to 46 are disordered; it reads MSKRTLEGSHRKKVRKSGFLSRSQSPTGRRILKARRKKGRKMLVKY. Residues 30–46 show a composition bias toward basic residues; the sequence is RILKARRKKGRKMLVKY.

It belongs to the bacterial ribosomal protein bL34 family.

The protein resides in the plastid. It localises to the cyanelle. This is Large ribosomal subunit protein bL34c (rpl34) from Cyanophora paradoxa.